A 230-amino-acid polypeptide reads, in one-letter code: UPF0688 protein C1orf174 homolog (230 aa).

Disordered regions lie at residues 1–85 and 97–166; these read MRSR…SLPK and AEDS…VRAS. The span at 11–30 shows a compositional bias: low complexity; sequence RSSARLRARSYSSASLASAR. Over residues 31 to 48 the composition is skewed to polar residues; it reads DVTSSTSAKTTCLASSSH. Residues 49–78 show a composition bias toward basic and acidic residues; the sequence is KATDRRTSKKFKYDKGHLVKAELQKLDPKS. At Ser-180 the chain carries Phosphoserine.

Belongs to the UPF0688 family.

Its subcellular location is the nucleus. The protein is UPF0688 protein C1orf174 homolog of Mus musculus (Mouse).